Reading from the N-terminus, the 80-residue chain is DNA-binding protein S1FA2 (80 aa).

Residues 54–59 (PPRKKK) carry the Nuclear localization signal motif. Over residues 55-70 (PRKKKPVSKKKMKREK) the composition is skewed to basic residues. Residues 55-80 (PRKKKPVSKKKMKREKLKQGVSAPGE) form a disordered region.

It belongs to the S1FA transcription factor family.

The protein resides in the nucleus. Functionally, DNA-binding protein that specifically recognizes a negative element (S1F) within the RPS1 promoter. The sequence is that of DNA-binding protein S1FA2 (S1FA2) from Oryza sativa subsp. japonica (Rice).